A 571-amino-acid polypeptide reads, in one-letter code: PR domain zinc finger protein 14 (571 aa).

Phosphoserine is present on Ser-79. A disordered region spans residues 129-191 (LGHQIIGGDN…PKPSNQEGKS (63 aa)). The segment covering 165–176 (RTSQLLPCSPSK) has biased composition (polar residues). Positions 194 to 384 (RFQFTEEDLH…DIPVSLQVTE (191 aa)) are interaction with CBFA2T2. The SET domain maps to 251–367 (EGLCLMQTVF…QNQELLVWYG (117 aa)). Residues 400–424 (YRCERCGKVFTYKYYRDKHLKYTPC) form a C2H2-type 1; atypical zinc finger. C2H2-type zinc fingers lie at residues 432–455 (FPCS…LHVH), 461–483 (HKCS…MRVH), 489–511 (YQCV…IRQH), 517–540 (FKCK…RRSH), and 546–568 (CSCS…MKFH).

Belongs to the class V-like SAM-binding methyltransferase superfamily. Interacts with CBFA2T2. As to expression, expressed in embryonic stem cells. Tends to be overexpressed in breast cancer (at protein level).

The protein resides in the nucleus. Its function is as follows. Transcription factor that has both positive and negative roles on transcription. Required for the maintenance of embryonic stem cell identity and the reacquisition of pluripotency in somatic cells. May play an essential role in germ cell development at 2 levels: the reacquisition of potential pluripotency, including SOX2 up-regulation, and successful epigenetic reprogramming, characterized by EHMT1 repression. Its association with CBFA2T2 is required for the functions in pluripotency and germ cell formation. Directly up-regulates the expression of pluripotency gene POU5F1 through its proximal enhancer. Binds to the DNA consensus sequence 5'-GGTC[TC]CTAA-3'. This Homo sapiens (Human) protein is PR domain zinc finger protein 14 (PRDM14).